Here is a 601-residue protein sequence, read N- to C-terminus: Aspartate--tRNA(Asp/Asn) ligase (601 aa).

Residue E173 coordinates L-aspartate. The tract at residues 197-200 (QLFK) is aspartate. R219 contributes to the L-aspartate binding site. ATP contacts are provided by residues 219 to 221 (RDE) and Q228. Position 456 (H456) interacts with L-aspartate. E490 provides a ligand contact to ATP. L-aspartate is bound at residue R497. 542-545 (GWDR) contacts ATP. Residues 566–601 (GGGYDPLTQAPAPITAEQRRESGVDAVPDDETAPQA) are disordered. Residues 592 to 601 (VPDDETAPQA) show a composition bias toward acidic residues.

Belongs to the class-II aminoacyl-tRNA synthetase family. Type 1 subfamily. Homodimer.

The protein resides in the cytoplasm. The enzyme catalyses tRNA(Asx) + L-aspartate + ATP = L-aspartyl-tRNA(Asx) + AMP + diphosphate. Its function is as follows. Aspartyl-tRNA synthetase with relaxed tRNA specificity since it is able to aspartylate not only its cognate tRNA(Asp) but also tRNA(Asn). Reaction proceeds in two steps: L-aspartate is first activated by ATP to form Asp-AMP and then transferred to the acceptor end of tRNA(Asp/Asn). This Beutenbergia cavernae (strain ATCC BAA-8 / DSM 12333 / CCUG 43141 / JCM 11478 / NBRC 16432 / NCIMB 13614 / HKI 0122) protein is Aspartate--tRNA(Asp/Asn) ligase.